Reading from the N-terminus, the 238-residue chain is Trypsin-3 (238 aa).

A signal peptide spans 1-7 (FAVAFAA). Positions 8–15 (PIDDEDDK) are cleaved as a propeptide — activation peptide. Positions 16–236 (IVGGYECRKN…YRSWISSTMS (221 aa)) constitute a Peptidase S1 domain. Intrachain disulfides connect Cys22/Cys152, Cys40/Cys56, Cys124/Cys225, Cys131/Cys198, Cys163/Cys177, and Cys188/Cys212. The active-site Charge relay system is the His55. Ca(2+) contacts are provided by Glu67, Asn69, Val72, and Glu77. Asp99 serves as the catalytic Charge relay system. Ser192 functions as the Charge relay system in the catalytic mechanism.

This sequence belongs to the peptidase S1 family. Requires Ca(2+) as cofactor.

The protein resides in the secreted. Its subcellular location is the extracellular space. It catalyses the reaction Preferential cleavage: Arg-|-Xaa, Lys-|-Xaa.. This Salmo salar (Atlantic salmon) protein is Trypsin-3.